The chain runs to 2890 residues: Bifunctional DNA-directed RNA polymerase subunit beta-beta' (2890 aa).

Residues 1–1377 (MSKKIPLKNR…DINIFGDEMD (1377 aa)) are DNA-directed RNA polymerase subunit beta. The tract at residues 1384–2890 (PIVIKEDDRP…LRTIEDSPKI (1507 aa)) is DNA-directed RNA polymerase subunit beta'. 4 residues coordinate Zn(2+): C1449, C1451, C1465, and C1468. Positions 1849, 1851, and 1853 each coordinate Mg(2+). C2179, C2253, C2260, and C2263 together coordinate Zn(2+).

In the N-terminal section; belongs to the RNA polymerase beta chain family. It in the C-terminal section; belongs to the RNA polymerase beta' chain family. As to quaternary structure, the RNAP catalytic core consists of 2 alpha, 1 beta/beta' and 1 omega subunit. When a sigma factor is associated with the core the holoenzyme is formed, which can initiate transcription. Mg(2+) is required as a cofactor. It depends on Zn(2+) as a cofactor.

The enzyme catalyses RNA(n) + a ribonucleoside 5'-triphosphate = RNA(n+1) + diphosphate. In terms of biological role, DNA-dependent RNA polymerase catalyzes the transcription of DNA into RNA using the four ribonucleoside triphosphates as substrates. The sequence is that of Bifunctional DNA-directed RNA polymerase subunit beta-beta' (rpoBC) from Helicobacter acinonychis (strain Sheeba).